Consider the following 430-residue polypeptide: Putrescine 2-hydroxylase (430 aa).

In terms of domain architecture, Rieske spans 88 to 203 (LYVGHQKLVP…LRDCHGLLFE (116 aa)). [2Fe-2S] cluster-binding residues include Cys-128, His-130, Cys-162, and His-165.

Belongs to the bacterial ring-hydroxylating dioxygenase alpha subunit family. The cofactor is [2Fe-2S] cluster.

Functionally, rieske-type iron sulfur protein that can catalyze in vitro the 2-hydroxylation of putrescine, forming 2-hydroxyputrescine. May be involved in the biosynthesis of the cyclic hydroxamate siderophore alcaligin. The chain is Putrescine 2-hydroxylase from Bordetella bronchiseptica (strain ATCC BAA-588 / NCTC 13252 / RB50) (Alcaligenes bronchisepticus).